The primary structure comprises 249 residues: Methionine aminopeptidase (249 aa).

Histidine 77 contacts substrate. Aspartate 94, aspartate 105, and histidine 168 together coordinate a divalent metal cation. Position 175 (histidine 175) interacts with substrate. Glutamate 201 and glutamate 232 together coordinate a divalent metal cation.

It belongs to the peptidase M24A family. Methionine aminopeptidase type 1 subfamily. As to quaternary structure, monomer. The cofactor is Co(2+). Zn(2+) is required as a cofactor. It depends on Mn(2+) as a cofactor. Fe(2+) serves as cofactor.

The catalysed reaction is Release of N-terminal amino acids, preferentially methionine, from peptides and arylamides.. Removes the N-terminal methionine from nascent proteins. The N-terminal methionine is often cleaved when the second residue in the primary sequence is small and uncharged (Met-Ala-, Cys, Gly, Pro, Ser, Thr, or Val). Requires deformylation of the N(alpha)-formylated initiator methionine before it can be hydrolyzed. The sequence is that of Methionine aminopeptidase from Clostridium perfringens (strain 13 / Type A).